The following is a 323-amino-acid chain: Ribose-phosphate pyrophosphokinase 2 (323 aa).

Residues 43–45 (DGE) and 102–103 (RQ) contribute to the ATP site. Residues histidine 136 and aspartate 177 each contribute to the Mg(2+) site. The active site involves lysine 200. Residues arginine 202, aspartate 226, and 230-234 (DTAGT) contribute to the D-ribose 5-phosphate site.

Belongs to the ribose-phosphate pyrophosphokinase family. Class I subfamily. As to quaternary structure, homohexamer. The cofactor is Mg(2+).

It localises to the cytoplasm. It catalyses the reaction D-ribose 5-phosphate + ATP = 5-phospho-alpha-D-ribose 1-diphosphate + AMP + H(+). It functions in the pathway metabolic intermediate biosynthesis; 5-phospho-alpha-D-ribose 1-diphosphate biosynthesis; 5-phospho-alpha-D-ribose 1-diphosphate from D-ribose 5-phosphate (route I): step 1/1. Its function is as follows. Involved in the biosynthesis of the central metabolite phospho-alpha-D-ribosyl-1-pyrophosphate (PRPP) via the transfer of pyrophosphoryl group from ATP to 1-hydroxyl of ribose-5-phosphate (Rib-5-P). This chain is Ribose-phosphate pyrophosphokinase 2, found in Enterococcus faecalis (strain ATCC 700802 / V583).